The sequence spans 238 residues: MARACLQAVKYLMFAFNLLFWLGGCGVLGVGIWLAATQGSFATLSSSFPSLSAANLLIITGAFVMAIGFVGCLGAIKENKCLLLTFFLLLLLVFLLEATIAILFFAYTDKIDRYAQQDLKKGLHLYGTQGNVGLTNAWSIIQTDFRCCGVSNYTDWFEVYNATRVPDSCCLEFSESCGLHAPGTWWKAPCYETVKVWLQENLLAVGIFGLCTALVQILGLTFAMTMYCQVVKADTYCA.

The Cytoplasmic portion of the chain corresponds to 1–13 (MARACLQAVKYLM). The helical transmembrane segment at 14-34 (FAFNLLFWLGGCGVLGVGIWL) threads the bilayer. The Extracellular segment spans residues 35–55 (AATQGSFATLSSSFPSLSAAN). Residues 56–76 (LLIITGAFVMAIGFVGCLGAI) form a helical membrane-spanning segment. The Cytoplasmic segment spans residues 77-85 (KENKCLLLT). Residues 86-106 (FFLLLLLVFLLEATIAILFFA) traverse the membrane as a helical segment. Over 107–201 (YTDKIDRYAQ…ETVKVWLQEN (95 aa)) the chain is Extracellular. N-linked (GlcNAc...) asparagine glycans are attached at residues Asn152 and Asn161. Residues 202–222 (LLAVGIFGLCTALVQILGLTF) traverse the membrane as a helical segment. Over 223 to 238 (AMTMYCQVVKADTYCA) the chain is Cytoplasmic.

This sequence belongs to the tetraspanin (TM4SF) family. In terms of assembly, forms a complex with integrins. Interacts with HRH4. As to expression, expressed in multiple tissues but is absent in brain, lymphoid cells, and platelets.

It is found in the cell membrane. In terms of biological role, structural component of specialized membrane microdomains known as tetraspanin-enriched microdomains (TERMs), which act as platforms for receptor clustering and signaling. Plays an essential role in migrasome formation and migration on retracting fibers at the rear end of migrating cells. Migrasomes are cellular organelles that form as large vesicle-like structures on retraction fibers of migrating cells. Mechanistically, acts as a membrane curvature sensor and participates in stabilizing the migrasome structure in a late stage of biogenesis. May also play a regulatory role for the histamine H4 receptor/HRH4 without affecting histamine binding to HRH4 or signaling. This is Tetraspanin-4 (TSPAN4) from Homo sapiens (Human).